A 289-amino-acid chain; its full sequence is Iodotyrosine deiodinase 1 (289 aa).

Residues 1 to 21 form a helical membrane-spanning segment; the sequence is MFLLTPVLVAVVCILMVWIFK. FMN is bound by residues 100-104 and 128-129; these read RRSVR and SG. 3,5-diiodo-L-tyrosine-binding residues include A130, E157, Y161, and K182. A130, E157, Y161, and K182 together coordinate 3-iodo-L-tyrosine. FMN is bound by residues 237-239 and R279; that span reads TTT.

Belongs to the nitroreductase family. In terms of assembly, homodimer. FMN serves as cofactor. In terms of tissue distribution, detected in thyroid (at protein level).

The protein localises to the cell membrane. It is found in the cytoplasmic vesicle membrane. It catalyses the reaction 2 iodide + L-tyrosine + 2 NADP(+) = 3,5-diiodo-L-tyrosine + 2 NADPH + H(+). The enzyme catalyses iodide + L-tyrosine + NADP(+) = 3-iodo-L-tyrosine + NADPH. The catalysed reaction is 3-iodo-L-tyrosine + iodide + NADP(+) = 3,5-diiodo-L-tyrosine + NADPH + H(+). It carries out the reaction L-tyrosine + chloride + NADP(+) = 3-chloro-L-tyrosine + NADPH. It catalyses the reaction bromide + L-tyrosine + NADP(+) = 3-bromo-L-tyrosine + NADPH. Its function is as follows. Catalyzes the dehalogenation of halotyrosines such as 3-bromo-L-tyrosine, 3-chloro-L-tyrosine, 3-iodo-L-tyrosine and 3,5-diiodo-L-tyrosine. During thyroid hormone biosynthesis, facilitates iodide salvage by catalysing the oxidative NADPH-dependent deiodination of the halogenated by-products of thyroid hormone production, monoiodotyrosine (L-MIT) and diiodotyrosine (L-DIT). The scavanged iodide can then reenter the hormone-producing pathways. Acts more efficiently on 3-iodo-L-tyrosine than 3,5-diiodo-L-tyrosine. The polypeptide is Iodotyrosine deiodinase 1 (IYD) (Sus scrofa (Pig)).